The primary structure comprises 399 residues: Dual-specificity RNA methyltransferase RlmN (399 aa).

Glu-122 functions as the Proton acceptor in the catalytic mechanism. Residues 128–371 (ETDRGTLCVS…VRTPRGRDIL (244 aa)) enclose the Radical SAM core domain. Cysteines 135 and 374 form a disulfide. [4Fe-4S] cluster is bound by residues Cys-142, Cys-146, and Cys-149. S-adenosyl-L-methionine is bound by residues 200 to 201 (GE), Ser-232, 254 to 256 (SLH), and Asn-331. Cys-374 functions as the S-methylcysteine intermediate in the catalytic mechanism.

This sequence belongs to the radical SAM superfamily. RlmN family. It depends on [4Fe-4S] cluster as a cofactor.

Its subcellular location is the cytoplasm. The enzyme catalyses adenosine(2503) in 23S rRNA + 2 reduced [2Fe-2S]-[ferredoxin] + 2 S-adenosyl-L-methionine = 2-methyladenosine(2503) in 23S rRNA + 5'-deoxyadenosine + L-methionine + 2 oxidized [2Fe-2S]-[ferredoxin] + S-adenosyl-L-homocysteine. The catalysed reaction is adenosine(37) in tRNA + 2 reduced [2Fe-2S]-[ferredoxin] + 2 S-adenosyl-L-methionine = 2-methyladenosine(37) in tRNA + 5'-deoxyadenosine + L-methionine + 2 oxidized [2Fe-2S]-[ferredoxin] + S-adenosyl-L-homocysteine. Functionally, specifically methylates position 2 of adenine 2503 in 23S rRNA and position 2 of adenine 37 in tRNAs. m2A2503 modification seems to play a crucial role in the proofreading step occurring at the peptidyl transferase center and thus would serve to optimize ribosomal fidelity. This is Dual-specificity RNA methyltransferase RlmN from Rhodopseudomonas palustris (strain TIE-1).